The primary structure comprises 256 residues: Small ribosomal subunit protein eS1 (256 aa).

Residue Ala2 is modified to N-acetylalanine; partial.

The protein belongs to the eukaryotic ribosomal protein eS1 family. As to quaternary structure, component of the small ribosomal subunit. Mature ribosomes consist of a small (40S) and a large (60S) subunit. The 40S subunit contains about 33 different proteins and 1 molecule of RNA (18S). The 60S subunit contains about 49 different proteins and 3 molecules of RNA (25S, 5.8S and 5S).

It is found in the cytoplasm. The chain is Small ribosomal subunit protein eS1 from Lachancea thermotolerans (strain ATCC 56472 / CBS 6340 / NRRL Y-8284) (Yeast).